A 145-amino-acid polypeptide reads, in one-letter code: 3-hydroxyacyl-[acyl-carrier-protein] dehydratase FabZ (145 aa).

Histidine 47 is an active-site residue.

The protein belongs to the thioester dehydratase family. FabZ subfamily.

The protein localises to the cytoplasm. The catalysed reaction is a (3R)-hydroxyacyl-[ACP] = a (2E)-enoyl-[ACP] + H2O. Its function is as follows. Involved in unsaturated fatty acids biosynthesis. Catalyzes the dehydration of short chain beta-hydroxyacyl-ACPs and long chain saturated and unsaturated beta-hydroxyacyl-ACPs. This Chromohalobacter salexigens (strain ATCC BAA-138 / DSM 3043 / CIP 106854 / NCIMB 13768 / 1H11) protein is 3-hydroxyacyl-[acyl-carrier-protein] dehydratase FabZ.